Reading from the N-terminus, the 186-residue chain is Small ribosomal subunit protein uS7 (186 aa).

Belongs to the universal ribosomal protein uS7 family. As to quaternary structure, part of the 30S ribosomal subunit.

In terms of biological role, one of the primary rRNA binding proteins, it binds directly to 16S rRNA where it nucleates assembly of the head domain of the 30S subunit. Is located at the subunit interface close to the decoding center. This is Small ribosomal subunit protein uS7 from Methanococcoides burtonii (strain DSM 6242 / NBRC 107633 / OCM 468 / ACE-M).